The chain runs to 158 residues: Cytochrome c-type biogenesis protein CcmE (158 aa).

Residues 1-23 (MNSQSFKNFPSLKFISKKRRKER) lie on the Cytoplasmic side of the membrane. The helical; Signal-anchor for type II membrane protein transmembrane segment at 24 to 44 (LLMVLLCLFIMAITTGLIVYA) threads the bilayer. The Periplasmic portion of the chain corresponds to 45–158 (MRNTANFFRT…DRLKKHHDIK (114 aa)). The heme site is built by His138 and Tyr142.

This sequence belongs to the CcmE/CycJ family.

It is found in the cell inner membrane. In terms of biological role, heme chaperone required for the biogenesis of c-type cytochromes. Transiently binds heme delivered by CcmC and transfers the heme to apo-cytochromes in a process facilitated by CcmF and CcmH. The sequence is that of Cytochrome c-type biogenesis protein CcmE from Bartonella bacilliformis (strain ATCC 35685 / KC583 / Herrer 020/F12,63).